Consider the following 207-residue polypeptide: Claudin-11 (207 aa).

A topological domain (cytoplasmic) is located at residue methionine 1. A helical membrane pass occupies residues 2–22; it reads VATCLQVVGFVTSFVGWIGII. Topologically, residues 23-82 are extracellular; it reads VTTSTNDWVVTCSYTIPTCRKMDELGSKGLWADCVMATGLHHCKPLVDILILPGYAQACR. Residues 83–103 form a helical membrane-spanning segment; the sequence is ALMIAASVLGLPGILLLLTVL. Residues 104–122 lie on the Cytoplasmic side of the membrane; it reads PCIRMGHEPGVAKYRRAQL. Residues 123 to 143 traverse the membrane as a helical segment; sequence AGVLLILLALCAIVATIWFPV. The Extracellular portion of the chain corresponds to 144–157; sequence CAHREITIVSFGYS. A helical membrane pass occupies residues 158–178; that stretch reads LYAGWIGAVMCLVGGCVIVCC. The Cytoplasmic portion of the chain corresponds to 179-207; it reads SGDAQSFGENRFYYSSGSSSPTHAKSAHV. A phosphoserine mark is found at serine 193, serine 194, serine 197, and serine 198.

The protein belongs to the claudin family. In terms of assembly, interacts with tetraspanin-3/TSPAN3. Interacts with OCLN.

The protein localises to the cell junction. Its subcellular location is the tight junction. It localises to the cell membrane. Functionally, plays a major role in tight junction-specific obliteration of the intercellular space, through calcium-independent cell-adhesion activity. The polypeptide is Claudin-11 (Cldn11) (Rattus norvegicus (Rat)).